The chain runs to 345 residues: S-adenosylmethionine:tRNA ribosyltransferase-isomerase (345 aa).

The protein belongs to the QueA family. In terms of assembly, monomer.

It localises to the cytoplasm. The catalysed reaction is 7-aminomethyl-7-carbaguanosine(34) in tRNA + S-adenosyl-L-methionine = epoxyqueuosine(34) in tRNA + adenine + L-methionine + 2 H(+). It functions in the pathway tRNA modification; tRNA-queuosine biosynthesis. In terms of biological role, transfers and isomerizes the ribose moiety from AdoMet to the 7-aminomethyl group of 7-deazaguanine (preQ1-tRNA) to give epoxyqueuosine (oQ-tRNA). This chain is S-adenosylmethionine:tRNA ribosyltransferase-isomerase, found in Shewanella woodyi (strain ATCC 51908 / MS32).